Consider the following 422-residue polypeptide: ORC1-type DNA replication protein 13 (422 aa).

Residues 80 to 84, Tyr231, and Arg243 each bind ATP; that span reads TGKTL.

The protein belongs to the CDC6/cdc18 family.

In terms of biological role, involved in regulation of DNA replication. The protein is ORC1-type DNA replication protein 13 (cdc6m) of Haloarcula marismortui (strain ATCC 43049 / DSM 3752 / JCM 8966 / VKM B-1809) (Halobacterium marismortui).